Here is a 408-residue protein sequence, read N- to C-terminus: Succinylornithine transaminase (408 aa).

At Lys-252 the chain carries N6-(pyridoxal phosphate)lysine.

Belongs to the class-III pyridoxal-phosphate-dependent aminotransferase family. AstC subfamily. Requires pyridoxal 5'-phosphate as cofactor.

It catalyses the reaction N(2)-succinyl-L-ornithine + 2-oxoglutarate = N-succinyl-L-glutamate 5-semialdehyde + L-glutamate. Its pathway is amino-acid degradation; L-arginine degradation via AST pathway; L-glutamate and succinate from L-arginine: step 3/5. Catalyzes the transamination of N(2)-succinylornithine and alpha-ketoglutarate into N(2)-succinylglutamate semialdehyde and glutamate. Can also act as an acetylornithine aminotransferase. In Salmonella typhimurium (strain LT2 / SGSC1412 / ATCC 700720), this protein is Succinylornithine transaminase.